The sequence spans 147 residues: uncharacterized protein (147 aa).

The chain crosses the membrane as a helical span at residues 3 to 23 (APMVGMVVLVVTLGAAVLALS).

It to M.tuberculosis Rv1312.

The protein localises to the membrane. This is an uncharacterized protein from Mycobacterium leprae (strain TN).